The sequence spans 288 residues: Zinc finger protein 42 (288 aa).

2 stretches are compositionally biased toward basic and acidic residues: residues 1 to 11 and 26 to 38; these read MNEQKMNEQMK and ALDR…DEAR. Positions 1–48 are disordered; it reads MNEQKMNEQMKKTAKTSGQKGPGGRALDRLTLKQDEARPVQNTRVEAP. 4 C2H2-type zinc fingers span residues 170-194, 199-221, 227-251, and 258-281; these read LECP…MLVH, HVCA…FLVH, YQCT…IRIH, and VCPF…ILTH. Glycyl lysine isopeptide (Lys-Gly) (interchain with G-Cter in ubiquitin) cross-links involve residues lysine 213 and lysine 215.

This sequence belongs to the krueppel C2H2-type zinc-finger protein family. Post-translationally, polyubiquitinated by RNF12, leading to proteasomal degradation. In terms of tissue distribution, restricted to testis, to germ cells in the early stages of spermatogenesis. Not expressed in spermatids, nor spermatozoa. Expressed in embryonic stem (ES) cells.

Its subcellular location is the nucleus. Its function is as follows. Involved in the reprogramming of X-chromosome inactivation during the acquisition of pluripotency. Required for efficient elongation of TSIX, a non-coding RNA antisense to XIST. Binds DXPas34 enhancer within the TSIX promoter. Involved in ES cell self-renewal. The polypeptide is Zinc finger protein 42 (Zfp42) (Mus musculus (Mouse)).